Reading from the N-terminus, the 234-residue chain is Sugar fermentation stimulation protein homolog (234 aa).

This sequence belongs to the SfsA family.

The chain is Sugar fermentation stimulation protein homolog from Shewanella sp. (strain MR-7).